A 470-amino-acid polypeptide reads, in one-letter code: Poly(A) polymerase catalytic subunit (470 aa).

Residues D192 and D194 contribute to the active site.

It belongs to the poxviridae poly(A) polymerase catalytic subunit family. In terms of assembly, heterodimer of a large (catalytic) subunit and a small (regulatory) subunit.

It catalyses the reaction RNA(n) + ATP = RNA(n)-3'-adenine ribonucleotide + diphosphate. Functionally, polymerase that creates the 3'-poly(A) tail of mRNA's. This chain is Poly(A) polymerase catalytic subunit (PAPL), found in Molluscum contagiosum virus subtype 1 (MOCV).